The primary structure comprises 161 residues: Endoribonuclease YbeY (161 aa).

Positions 127, 131, and 137 each coordinate Zn(2+).

Belongs to the endoribonuclease YbeY family. It depends on Zn(2+) as a cofactor.

Its subcellular location is the cytoplasm. In terms of biological role, single strand-specific metallo-endoribonuclease involved in late-stage 70S ribosome quality control and in maturation of the 3' terminus of the 16S rRNA. This Listeria monocytogenes serotype 4a (strain HCC23) protein is Endoribonuclease YbeY.